The chain runs to 102 residues: Small ribosomal subunit protein uS10 (102 aa).

This sequence belongs to the universal ribosomal protein uS10 family. As to quaternary structure, part of the 30S ribosomal subunit.

In terms of biological role, involved in the binding of tRNA to the ribosomes. This Methanocorpusculum labreanum (strain ATCC 43576 / DSM 4855 / Z) protein is Small ribosomal subunit protein uS10.